The chain runs to 593 residues: Transcription factor ATEG_07667 (593 aa).

Positions 18 to 47 form a DNA-binding region, zn(2)-C6 fungal-type; the sequence is CTQCYKAKCRCVRTPSGDTCERCIRLKKRC.

The protein localises to the nucleus. In terms of biological role, transcriptional regulator that regulates both the azasperpyranone A biosynthesis clusters A and B. Specifically up-regulates the expression of the cluster A and B specific transcription factors ATEG_03638 and ATEG_07666, which in turn activate the expression of their respective clusters. The protein is Transcription factor ATEG_07667 of Aspergillus terreus (strain NIH 2624 / FGSC A1156).